We begin with the raw amino-acid sequence, 462 residues long: MSELNVITKERTAVINPIVTCQPLGAMYAVSGIERGMPLVHGSQGCSTFVRYGFARHFREPADIAVTSLHEDAAVFGGRKNLISGLGNLAARFKPDVMGVVTTCSSEIIGDDVAGFIKTAKVEIAKKMGEEAANKIKIVQINTPSFVEHQFKGYDNAIKAIVDTLAEPKDEENGKLIIIPGIVNPGDIREIKHMLSLMGVEGILLTDTSDPFDSPLRPSKADKNPYYQKGGTPLADLQDCANSLGTISLANYANSAPASLEKKYNMPSKVSEAPIGIQNTDSFIRTVKKFTGNDVTDEILDERGIVIDAMADVASRYLFGRKVAIYGDPSITVGMARFVAELGMIPKVVCTGVKNEYFVNDLKKVAKESDEDIDALFGQDLRALDVYLKENPVDLMIGSSDGRLMAKDLGIPLYRVGYPVYDRVGYQRRPIIGYNGALNLVDGITNTILDKYYETQDWKLQQ.

Residues C21, C46, C104, and S145 each coordinate [8Fe-7S] cluster.

It belongs to the NifD/NifK/NifE/NifN family. In terms of assembly, tetramer of two alpha and two beta chains. Forms complex with the iron protein (nitrogenase component 2). [8Fe-7S] cluster serves as cofactor.

It catalyses the reaction N2 + 8 reduced [2Fe-2S]-[ferredoxin] + 16 ATP + 16 H2O = H2 + 8 oxidized [2Fe-2S]-[ferredoxin] + 2 NH4(+) + 16 ADP + 16 phosphate + 6 H(+). In terms of biological role, this molybdenum-iron protein is part of the nitrogenase complex that catalyzes the key enzymatic reactions in nitrogen fixation. The chain is Nitrogenase molybdenum-iron protein beta chain (nifK) from Methanococcus maripaludis (Methanococcus deltae).